We begin with the raw amino-acid sequence, 269 residues long: MLREPMNQHDAPGPAETGADSDAETDAETDAETDAGAADDRYRLSHNSQIGTVLRDLAWQKCMLSVRTRTAHQFVTSILHVDPVNRTFVFDWCNAEPERMSLMTSEENAFSGLLRGVPVNFVVGQPAATRYDDGPAFVAEFPEKLYHFQRRRHFRARTLVTKGYRCEMSLPDKTVLGLDIADLSLSGVGLRSRTVTADHLPVGTTVAKCRLDFRELGKLELDMQVVGHWLVGRDDSAIHHFGCAFVNPDGRMENFLQRLVFALELAHRG.

The interval 1–42 is disordered; the sequence is MLREPMNQHDAPGPAETGADSDAETDAETDAETDAGAADDRY. Acidic residues predominate over residues 19 to 33; the sequence is ADSDAETDAETDAET. A PilZ domain is found at 149–261; it reads QRRRHFRART…MENFLQRLVF (113 aa).

Belongs to the YcgR family. Monomer. Interacts with the flagellar basal bodies.

The protein localises to the bacterial flagellum basal body. Its function is as follows. Acts as a flagellar brake, regulating swimming and swarming in a bis-(3'-5') cyclic diguanylic acid (c-di-GMP)-dependent manner. Binds 1 c-di-GMP dimer per subunit. Increasing levels of c-di-GMP lead to decreased motility. The sequence is that of Flagellar brake protein YcgR from Cupriavidus taiwanensis (strain DSM 17343 / BCRC 17206 / CCUG 44338 / CIP 107171 / LMG 19424 / R1) (Ralstonia taiwanensis (strain LMG 19424)).